The primary structure comprises 155 residues: Small ribosomal subunit protein uS7cz/uS7cy (155 aa).

In terms of assembly, component of the chloroplast small ribosomal subunit (SSU). Mature 70S chloroplast ribosomes of higher plants consist of a small (30S) and a large (50S) subunit. The 30S small subunit contains 1 molecule of ribosomal RNA (16S rRNA) and 24 different proteins. The 50S large subunit contains 3 rRNA molecules (23S, 5S and 4.5S rRNA) and 33 different proteins.

The protein resides in the plastid. It is found in the chloroplast. Its function is as follows. Component of the chloroplast ribosome (chloro-ribosome), a dedicated translation machinery responsible for the synthesis of chloroplast genome-encoded proteins, including proteins of the transcription and translation machinery and components of the photosynthetic apparatus. This is Small ribosomal subunit protein uS7cz/uS7cy (rps7-A) from Spinacia oleracea (Spinach).